Consider the following 457-residue polypeptide: Serine/threonine-protein phosphatase 2A regulatory subunit B'' subunit gamma (457 aa).

2 consecutive EF-hand domains span residues 276–311 (PSAL…TLTS) and 344–379 (KEPA…IQEQ). Positions 289, 291, 293, 295, and 300 each coordinate Ca(2+).

It is found in the nucleus. Its subcellular location is the cytoplasm. In terms of biological role, possible role in the regulation of cell death. The protein is Serine/threonine-protein phosphatase 2A regulatory subunit B'' subunit gamma (ppp2r3c) of Danio rerio (Zebrafish).